The following is a 719-amino-acid chain: Pesticidal crystal protein Cry1Id (719 aa).

The protein belongs to the delta endotoxin family.

Functionally, promotes colloidosmotic lysis by binding to the midgut epithelial cells of many lepidopteran larvae. Active on Plutella xylostella and on Bombyx mori. This is Pesticidal crystal protein Cry1Id (cry1Id) from Bacillus thuringiensis.